The primary structure comprises 40 residues: Snaclec LmrLEC-1 (40 aa).

A disulfide bridge connects residues Cys-2 and Cys-13.

The protein belongs to the snaclec family. Dimer (non-covalently linked) of heterodimers of subunits alpha and beta (disulfide-linked). Expressed by the venom gland.

The protein resides in the secreted. Its function is as follows. Interferes with one step of hemostasis (modulation of platelet aggregation, or coagulation cascade, for example). This is Snaclec LmrLEC-1 from Lachesis muta rhombeata (Bushmaster).